The chain runs to 211 residues: Superoxide dismutase [Fe] (211 aa).

Positions 34, 85, 171, and 175 each coordinate Fe cation.

It belongs to the iron/manganese superoxide dismutase family. In terms of assembly, homotetramer at high temperature; homodimer at room temperature. It depends on Fe cation as a cofactor.

It localises to the cytoplasm. It catalyses the reaction 2 superoxide + 2 H(+) = H2O2 + O2. Functionally, destroys superoxide anion radicals which are normally produced within the cells and which are toxic to biological systems. The polypeptide is Superoxide dismutase [Fe] (sod) (Sulfolobus acidocaldarius (strain ATCC 33909 / DSM 639 / JCM 8929 / NBRC 15157 / NCIMB 11770)).